Reading from the N-terminus, the 84-residue chain is MSVKIRLARRGAKKKPFYRIVAADVESPRDGKFLESVGTYDPMVEPAAIILNEERIRYWMGEGATPTTTVKSILKKQGFSSNPA.

This sequence belongs to the bacterial ribosomal protein bS16 family.

This is Small ribosomal subunit protein bS16 from Desulforapulum autotrophicum (strain ATCC 43914 / DSM 3382 / VKM B-1955 / HRM2) (Desulfobacterium autotrophicum).